We begin with the raw amino-acid sequence, 158 residues long: Transcription factor BTF3 homolog 4 (158 aa).

The NAC-A/B domain occupies 33-98; the sequence is TADDKKLQSS…AETKQLTEML (66 aa). Positions 125–158 are disordered; it reads LDNKAPKAEDIDEEDDDVPDLVENFDEASKNEAN. Over residues 134-150 the composition is skewed to acidic residues; that stretch reads DIDEEDDDVPDLVENFD.

This sequence belongs to the NAC-beta family.

The sequence is that of Transcription factor BTF3 homolog 4 (btf3l4) from Danio rerio (Zebrafish).